The primary structure comprises 728 residues: Phomopsene synthase (728 aa).

The terpene cyclase stretch occupies residues 1 to 327 (MEYRYSYVID…PRYHSDQSLD (327 aa)). 2 residues coordinate Mg(2+): D94 and D98. Substrate-binding positions include D94, D98, 181–184 (RIVD), N226, 230–234 (SWEKE), and 319–320 (RY). A DDXXD 1 motif is present at residues 94–98 (DDLVD). Positions 226-234 (NDVQSWEKE) match the NSE/DTE motif. Positions 328-728 (EMMVARMKYG…FRFLLSLLKV (401 aa)) are prenyltransferase. Basic and acidic residues predominate over residues 352–363 (ENRGTKRTHQDD). Residues 352–379 (ENRGTKRTHQDDTEGVQSVKRFNGASTK) form a disordered region. 3 repeat units span residues 381–386 (GINGTN), 387–392 (GINGLN), and 393–398 (GINGSN). A 3 X 6 AA approximate tandem repeats region spans residues 381 to 398 (GINGTNGINGLNGINGSN). The isopentenyl diphosphate site is built by K447, R450, and H479. 2 residues coordinate Mg(2+): D486 and D490. The DDXXD 2 motif lies at 486 to 490 (DDVQD). R495 is a dimethylallyl diphosphate binding site. R496 is a binding site for isopentenyl diphosphate. Dimethylallyl diphosphate contacts are provided by K574, T575, Q610, N617, K627, and K637.

The protein in the N-terminal section; belongs to the terpene synthase family. This sequence in the C-terminal section; belongs to the FPP/GGPP synthase family. In terms of assembly, hexamer. Mg(2+) is required as a cofactor.

It catalyses the reaction isopentenyl diphosphate + (2E,6E)-farnesyl diphosphate = (2E,6E,10E)-geranylgeranyl diphosphate + diphosphate. It functions in the pathway secondary metabolite biosynthesis; terpenoid biosynthesis. Its function is as follows. Bifunctional terpene synthase; part of the gene cluster that mediates the biosynthesis of the diterpene methyl phomopsenonate. At first, the universal precursor of diterpene, geranylgeranyl diphosphate (GGPP) is provided and is cyclized by the unusual bifunctional terpene synthase PaPS to give phomopsene. The C-terminal prenyltransferase domain of PaPS catalyzes formation of GGPP, whereas the N-terminal terpene cyclase domain catalyzes the cyclization of GGPP to phomopsene. Since the oxidation of a methylgroup to a carboxyl group is frequently catalyzed by a cytochrome P450 monooxygenase, the C-16 methyl group would be oxidized by the cluster-specific cytochrome P450 monooxygenase ORF3. Subsequently, oxidation of the allylic position and methylation of the carboxyl group may give methyl phomopsenonate. Although further study is necessary to identify genes such as a monooxygenase and a methyltransferase, the predicted functions of genes on the cluster are correlated with the structure of methyl phomopsenonate. The polypeptide is Phomopsene synthase (Phomopsis amygdali (Fusicoccum amygdali)).